Here is a 73-residue protein sequence, read N- to C-terminus: Kappa-scoloptoxin(03)-Ssm1c (73 aa).

Residues 1 to 23 (MKSWMAILLVMALIIFTLDNCYS) form the signal peptide. 3 disulfide bridges follow: Cys-32-Cys-58, Cys-41-Cys-57, and Cys-44-Cys-67.

The protein belongs to the scoloptoxin family. In terms of tissue distribution, expressed by the venom gland.

It localises to the secreted. Functionally, inhibits voltage-gated potassium channels. This chain is Kappa-scoloptoxin(03)-Ssm1c, found in Scolopendra mutilans (Chinese red-headed centipede).